We begin with the raw amino-acid sequence, 387 residues long: Probable WRKY transcription factor 36 (387 aa).

The WRKY DNA-binding region spans cysteine 197–proline 264. Positions arginine 322–threonine 366 are disordered. Residues leucine 329–serine 346 show a composition bias toward low complexity.

The protein localises to the nucleus. In terms of biological role, transcription factor. Interacts specifically with the W box (5'-(T)TGAC[CT]-3'), a frequently occurring elicitor-responsive cis-acting element. The sequence is that of Probable WRKY transcription factor 36 (WRKY36) from Arabidopsis thaliana (Mouse-ear cress).